The chain runs to 308 residues: Aspartate carbamoyltransferase catalytic subunit (308 aa).

Residues R57 and T58 each coordinate carbamoyl phosphate. Residue K86 participates in L-aspartate binding. The carbamoyl phosphate site is built by R107, H135, and Q138. Positions 168 and 229 each coordinate L-aspartate. The carbamoyl phosphate site is built by L268 and P269.

It belongs to the aspartate/ornithine carbamoyltransferase superfamily. ATCase family. As to quaternary structure, heterooligomer of catalytic and regulatory chains.

The catalysed reaction is carbamoyl phosphate + L-aspartate = N-carbamoyl-L-aspartate + phosphate + H(+). Its pathway is pyrimidine metabolism; UMP biosynthesis via de novo pathway; (S)-dihydroorotate from bicarbonate: step 2/3. Functionally, catalyzes the condensation of carbamoyl phosphate and aspartate to form carbamoyl aspartate and inorganic phosphate, the committed step in the de novo pyrimidine nucleotide biosynthesis pathway. The chain is Aspartate carbamoyltransferase catalytic subunit from Pyrococcus furiosus (strain ATCC 43587 / DSM 3638 / JCM 8422 / Vc1).